The chain runs to 190 residues: Threonylcarbamoyl-AMP synthase (190 aa).

The YrdC-like domain occupies 7-190 (GDAIAAAIDV…ALTGELFRQG (184 aa)).

This sequence belongs to the SUA5 family. TsaC subfamily.

The protein localises to the cytoplasm. The enzyme catalyses L-threonine + hydrogencarbonate + ATP = L-threonylcarbamoyladenylate + diphosphate + H2O. Required for the formation of a threonylcarbamoyl group on adenosine at position 37 (t(6)A37) in tRNAs that read codons beginning with adenine. Catalyzes the conversion of L-threonine, HCO(3)(-)/CO(2) and ATP to give threonylcarbamoyl-AMP (TC-AMP) as the acyladenylate intermediate, with the release of diphosphate. This Escherichia coli O157:H7 protein is Threonylcarbamoyl-AMP synthase.